Reading from the N-terminus, the 847-residue chain is Bifunctional lysine-specific demethylase and histidyl-hydroxylase NO66 (847 aa).

Polar residues predominate over residues 1–24; that stretch reads MEKVTNSAAAKPQGNNKKQESAYN. Disordered stretches follow at residues 1 to 45, 203 to 223, and 254 to 320; these read MEKV…SDLL, AEAD…KESV, and AEKE…ERKQ. The segment covering 203–214 has biased composition (basic and acidic residues); sequence AEADAKNNDTKK. The segment covering 268–278 has biased composition (low complexity); the sequence is STSSKEAAAAK. The span at 279–288 shows a compositional bias: basic and acidic residues; the sequence is TADHERRLLA. Residues 304-314 show a composition bias toward polar residues; the sequence is AMESVATQGAS. The residue at position 323 (Ser323) is a Phosphoserine. Thr329 carries the post-translational modification Phosphothreonine. At Ser330 the chain carries Phosphoserine. Residues 377 to 401 form a disordered region; it reads KAPEEGNNNNDEKEMSTETSETHKT. Basic and acidic residues predominate over residues 386-401; sequence NDEKEMSTETSETHKT. Residues 499-644 form the JmjC domain; it reads CSIRLLNPSA…NLLETLMPMV (146 aa). Residues His545, Asp547, and His610 each contribute to the Fe cation site.

This sequence belongs to the ROX family. NO66 subfamily. It depends on Fe(2+) as a cofactor.

It localises to the nucleus. The enzyme catalyses N(6),N(6)-dimethyl-L-lysyl(36)-[histone H3] + 2 2-oxoglutarate + 2 O2 = L-lysyl(36)-[histone H3] + 2 formaldehyde + 2 succinate + 2 CO2. In terms of biological role, oxygenase that can act as both a histone lysine demethylase and a ribosomal histidine hydroxylase. Specifically demethylates 'Lys-4' (H3K4me) and 'Lys-36' (H3K36me) of histone H3, thereby playing a central role in histone code. The chain is Bifunctional lysine-specific demethylase and histidyl-hydroxylase NO66 from Drosophila simulans (Fruit fly).